Here is a 237-residue protein sequence, read N- to C-terminus: MSNNLAIQLREGTSKSHSMAENVSFVKSFLSGVIDTNSYKKMMSNLYFVYKAMEEEMEYHKENDLIKPIYFVELNRSESLALDLNFYYGDTWKDIIEPSEATRVYINRIKKISKEKPLLLIAHAYTRYLGDLSGGQILKKIAQRALNVPNSQGLAFYEFDKIDDEQAFKQKYKKALDTLPVTDKMISQIVAEANIAFNLNMRMFQELEMSYIRIFTKILMQFLINSKDKLRVMLNFS.

H17 contacts heme b.

Belongs to the heme oxygenase family.

The protein resides in the plastid. It localises to the chloroplast. The enzyme catalyses heme b + 3 reduced [NADPH--hemoprotein reductase] + 3 O2 = biliverdin IXalpha + CO + Fe(2+) + 3 oxidized [NADPH--hemoprotein reductase] + 3 H2O + H(+). Functionally, catalyzes the opening of the heme ring with the release of iron. Key enzyme in the synthesis of the chromophoric part of the photosynthetic antennae. This Guillardia theta (Cryptophyte) protein is Heme oxygenase (pbsA).